The sequence spans 176 residues: dCTP deaminase (176 aa).

Residues 99–104 (RSTLAR) and D115 contribute to the dCTP site. The active-site Proton donor/acceptor is the E125. Q163 is a binding site for dCTP.

It belongs to the dCTP deaminase family. Homotrimer.

The enzyme catalyses dCTP + H2O + H(+) = dUTP + NH4(+). It participates in pyrimidine metabolism; dUMP biosynthesis; dUMP from dCTP (dUTP route): step 1/2. Functionally, catalyzes the deamination of dCTP to dUTP. The protein is dCTP deaminase of Pyrobaculum aerophilum (strain ATCC 51768 / DSM 7523 / JCM 9630 / CIP 104966 / NBRC 100827 / IM2).